The sequence spans 221 residues: Tumor protein p53-inducible nuclear protein 2 (221 aa).

An LIR motif is present at residues 26-41 (VSEEDEVDGWLIIDLQ). The disordered stretch occupies residues 41 to 68 (QDSYTAPPDPGASPAPAGRPPPAPSLMD). The segment covering 47–64 (PPDPGASPAPAGRPPPAP) has biased composition (pro residues). Residue Ser136 is modified to Phosphoserine. The disordered stretch occupies residues 177-210 (RQRAERHTLSAKVLQRQNRARESRSRRPKHQGSF).

As to quaternary structure, interacts with VMP1, GABARAP, GABARAPL1, GABARAPL2, MAP1LC3A, MAP1LC3B, MAP1LC3C and THRA.

Its subcellular location is the cytoplasm. The protein localises to the cytosol. It is found in the nucleus. It localises to the PML body. The protein resides in the cytoplasmic vesicle. Its subcellular location is the autophagosome. In terms of biological role, dual regulator of transcription and autophagy. Positively regulates autophagy and is required for autophagosome formation and processing. May act as a scaffold protein that recruits MAP1LC3A, GABARAP and GABARAPL2 and brings them to the autophagosome membrane by interacting with VMP1 where, in cooperation with the BECN1-PI3-kinase class III complex, they trigger autophagosome development. Acts as a transcriptional activator of THRA. The sequence is that of Tumor protein p53-inducible nuclear protein 2 (Tp53inp2) from Mus musculus (Mouse).